A 676-amino-acid chain; its full sequence is Pescadillo homolog (676 aa).

The stretch at 298–327 (IAAMADDEDEQEVEMAEADAEDDDEEENTE) forms a coiled coil. Disordered regions lie at residues 298-338 (IAAM…TAPD), 413-439 (PLANGASAAGAEDAATPQVQWPHSTKP), 478-502 (VKPKKGEYDPNLPLAAQQPDGEAEA), and 515-676 (EVDD…AERA). Positions 302–327 (ADDEDEQEVEMAEADAEDDDEEENTE) are enriched in acidic residues. In terms of domain architecture, BRCT spans 351-466 (EIASLFAPFT…KLLRPDLYAP (116 aa)). Low complexity predominate over residues 415–427 (ANGASAAGAEDAA). Composition is skewed to acidic residues over residues 515 to 524 (EVDDDEDMDA), 539 to 557 (DVADSDDDDEDDSESDAEG), and 565 to 577 (FDDESEAESDISE). Residues 568–676 (ESEAESDISE…EKAKAAAERA (109 aa)) adopt a coiled-coil conformation. Basic and acidic residues-rich tracts occupy residues 579–608 (EAARLQHQRELEAEATGKKLDVKAPTKKEQ), 620–631 (KRAEEEERDRQK), 643–659 (KRIEYGENKRDTESENL), and 666–676 (LEKAKAAAERA).

This sequence belongs to the pescadillo family. Component of the NOP7 complex, composed of ERB1, NOP7 and YTM1. The complex is held together by ERB1, which interacts with NOP7 via its N-terminal domain and with YTM1 via a high-affinity interaction between the seven-bladed beta-propeller domains of the 2 proteins. The NOP7 complex associates with the 66S pre-ribosome.

It localises to the nucleus. Its subcellular location is the nucleolus. The protein resides in the nucleoplasm. In terms of biological role, component of the NOP7 complex, which is required for maturation of the 25S and 5.8S ribosomal RNAs and formation of the 60S ribosome. The chain is Pescadillo homolog from Phaeosphaeria nodorum (strain SN15 / ATCC MYA-4574 / FGSC 10173) (Glume blotch fungus).